The sequence spans 157 residues: Small ribosomal subunit protein uS7 (157 aa).

Belongs to the universal ribosomal protein uS7 family. Part of the 30S ribosomal subunit. Contacts proteins S9 and S11.

In terms of biological role, one of the primary rRNA binding proteins, it binds directly to 16S rRNA where it nucleates assembly of the head domain of the 30S subunit. Is located at the subunit interface close to the decoding center, probably blocks exit of the E-site tRNA. The protein is Small ribosomal subunit protein uS7 of Albidiferax ferrireducens (strain ATCC BAA-621 / DSM 15236 / T118) (Rhodoferax ferrireducens).